Consider the following 97-residue polypeptide: uncharacterized protein (97 aa).

2 disordered regions span residues 1–20 (MTEG…IASD) and 52–97 (VPAA…GRRA).

This is an uncharacterized protein from Paracoccus pantotrophus (Thiosphaera pantotropha).